Here is a 76-residue protein sequence, read N- to C-terminus: Acyl carrier protein (76 aa).

In terms of domain architecture, Carrier spans 1–75 (MIFEKIKDLI…DIVFYITKNT (75 aa)). Ser35 bears the O-(pantetheine 4'-phosphoryl)serine mark.

Belongs to the acyl carrier protein (ACP) family. Post-translationally, 4'-phosphopantetheine is transferred from CoA to a specific serine of apo-ACP by AcpS. This modification is essential for activity because fatty acids are bound in thioester linkage to the sulfhydryl of the prosthetic group.

The protein localises to the cytoplasm. Its pathway is lipid metabolism; fatty acid biosynthesis. Its function is as follows. Carrier of the growing fatty acid chain in fatty acid biosynthesis. This chain is Acyl carrier protein, found in Aster yellows witches'-broom phytoplasma (strain AYWB).